The primary structure comprises 285 residues: Nucleotide-binding protein GSU1884 (285 aa).

ATP is bound at residue 8 to 15 (GLSGSGKS). 59–62 (DIRG) is a binding site for GTP.

It belongs to the RapZ-like family.

Functionally, displays ATPase and GTPase activities. The sequence is that of Nucleotide-binding protein GSU1884 from Geobacter sulfurreducens (strain ATCC 51573 / DSM 12127 / PCA).